A 73-amino-acid polypeptide reads, in one-letter code: Translation initiation factor IF-1 (73 aa).

In terms of domain architecture, S1-like spans 1 to 73 (MPKKDGVIEI…SRGRIVYRYK (73 aa)).

The protein belongs to the IF-1 family. In terms of assembly, component of the 30S ribosomal translation pre-initiation complex which assembles on the 30S ribosome in the order IF-2 and IF-3, IF-1 and N-formylmethionyl-tRNA(fMet); mRNA recruitment can occur at any time during PIC assembly.

The protein localises to the cytoplasm. One of the essential components for the initiation of protein synthesis. Stabilizes the binding of IF-2 and IF-3 on the 30S subunit to which N-formylmethionyl-tRNA(fMet) subsequently binds. Helps modulate mRNA selection, yielding the 30S pre-initiation complex (PIC). Upon addition of the 50S ribosomal subunit IF-1, IF-2 and IF-3 are released leaving the mature 70S translation initiation complex. This Kineococcus radiotolerans (strain ATCC BAA-149 / DSM 14245 / SRS30216) protein is Translation initiation factor IF-1.